The primary structure comprises 456 residues: FAD-dependent monooxygenase sor5 (456 aa).

A helical membrane pass occupies residues 18-38; the sequence is PLEVAIVGGGLTGLALALGLL. Residue Asn-43 is glycosylated (N-linked (GlcNAc...) asparagine). Positions 48 and 119 each coordinate FAD. Arg-200 is an active-site residue. Residues Asp-331 and Ala-344 each contribute to the FAD site.

It belongs to the paxM FAD-dependent monooxygenase family. FAD is required as a cofactor.

It localises to the membrane. It functions in the pathway secondary metabolite biosynthesis. In terms of biological role, FAD-dependent monooxygenase; part of the SOR gene cluster that mediates the biosynthesis of sorbicillinoids, a diverse group of yellow secondary metabolites that restrict growth of competing pathogenic fungi but not of bacteria. Sorbicillinoids biosynthesis requires the action of two PKSs. The SOR cluster is required for the production of trichodimerol and dihydrotrichotetronin, with sor2 being sufficient for production of trichodimerol, but not dihydrotrichotetronin in the light. Sor1 iteratively combines three acetyl units and the growing chain is modified by the ketoacyl reductase subunit, and optional by the enoyl reductase subunit in the second cycle. The polyketide is then handed over to the PKS sor2, which adds three more acetyl units, and two methyl groups. Sor2 releases an aldehyde, which undergoes spontaneous cyclization resulting in the formation of sorbicillin or 2',3'-dihydrosorbicillin. The monooxygenase sor5 oxidizes sorbicillin and 2',3'-dihydrosorbicillin to 2',3'-dihydrosorbicillinol and sorbicillinol, respectively. The oxidoreductase sor8 further converts sorbicillinol into oxosorbicillinol. Sorbicillinol is the building block for the other sorbicillinoids such as disorbicillinol, bisvertinolon, dihydrobisvertinolone, and dihydrotrichotetronine. This is FAD-dependent monooxygenase sor5 from Hypocrea jecorina (strain QM6a) (Trichoderma reesei).